The chain runs to 212 residues: Adenylate kinase (212 aa).

10–15 (GAGKGT) lines the ATP pocket. Positions 30–59 (AIGDIFRTIIKTSTSEAELINNYVKQGELI) are NMP. Residues Arg36, 57 to 59 (ELI), 85 to 88 (GYPR), and Gln92 each bind AMP. Residues 122–160 (GRYSCKNCGKIYNRYFLQPKTDNVCDVCGSSTFDYRKDD) form an LID region. Arg123 provides a ligand contact to ATP. Positions 126 and 129 each coordinate Zn(2+). Residue 132 to 133 (IY) coordinates ATP. Cys146 and Cys149 together coordinate Zn(2+). The AMP site is built by Arg157 and Arg168. Lys196 is an ATP binding site.

The protein belongs to the adenylate kinase family. As to quaternary structure, monomer.

It localises to the cytoplasm. The catalysed reaction is AMP + ATP = 2 ADP. It functions in the pathway purine metabolism; AMP biosynthesis via salvage pathway; AMP from ADP: step 1/1. Its function is as follows. Catalyzes the reversible transfer of the terminal phosphate group between ATP and AMP. Plays an important role in cellular energy homeostasis and in adenine nucleotide metabolism. This is Adenylate kinase from Rickettsia africae (strain ESF-5).